A 351-amino-acid chain; its full sequence is Peptide chain release factor 1 (351 aa).

The residue at position 229 (Gln-229) is an N5-methylglutamine.

It belongs to the prokaryotic/mitochondrial release factor family. In terms of processing, methylated by PrmC. Methylation increases the termination efficiency of RF1.

The protein localises to the cytoplasm. Its function is as follows. Peptide chain release factor 1 directs the termination of translation in response to the peptide chain termination codons UAG and UAA. The protein is Peptide chain release factor 1 of Ruegeria pomeroyi (strain ATCC 700808 / DSM 15171 / DSS-3) (Silicibacter pomeroyi).